A 418-amino-acid polypeptide reads, in one-letter code: Pyruvate kinase isozyme G, chloroplastic (418 aa).

K(+) contacts are provided by D14 and T15. An ATP-binding site is contributed by R21. E165 provides a ligand contact to Mg(2+). Substrate-binding residues include G188, D189, and T221. Residue D189 participates in Mg(2+) binding.

Belongs to the pyruvate kinase family. It depends on Mg(2+) as a cofactor. K(+) serves as cofactor. As to expression, expressed in developing and germinating endosperm and in roots.

It localises to the plastid. The protein localises to the chloroplast. It carries out the reaction pyruvate + ATP = phosphoenolpyruvate + ADP + H(+). It participates in carbohydrate degradation; glycolysis; pyruvate from D-glyceraldehyde 3-phosphate: step 5/5. This is Pyruvate kinase isozyme G, chloroplastic from Ricinus communis (Castor bean).